A 65-amino-acid polypeptide reads, in one-letter code: U11-theraphotoxin-Cg1b (65 aa).

An N-terminal signal peptide occupies residues 1–21 (MKTTILVVILGLTLLFALSAA). Residues 22–29 (TELKDEER) constitute a propeptide that is removed on maturation. 3 disulfides stabilise this stretch: C31–C45, C38–C50, and C44–C57.

This sequence belongs to the neurotoxin 10 (Hwtx-1) family. 32 (Jztx-16) subfamily. As to expression, expressed by the venom gland.

The protein resides in the secreted. Its function is as follows. Probable ion channel inhibitor. The protein is U11-theraphotoxin-Cg1b of Chilobrachys guangxiensis (Chinese earth tiger tarantula).